The sequence spans 442 residues: Tryptophan synthase beta chain 2 (442 aa).

Residue Lys110 is modified to N6-(pyridoxal phosphate)lysine.

The protein belongs to the TrpB family. Tetramer of two alpha and two beta chains. Requires pyridoxal 5'-phosphate as cofactor.

It catalyses the reaction (1S,2R)-1-C-(indol-3-yl)glycerol 3-phosphate + L-serine = D-glyceraldehyde 3-phosphate + L-tryptophan + H2O. The protein operates within amino-acid biosynthesis; L-tryptophan biosynthesis; L-tryptophan from chorismate: step 5/5. Its function is as follows. The beta subunit is responsible for the synthesis of L-tryptophan from indole and L-serine. This Thermococcus kodakarensis (strain ATCC BAA-918 / JCM 12380 / KOD1) (Pyrococcus kodakaraensis (strain KOD1)) protein is Tryptophan synthase beta chain 2.